We begin with the raw amino-acid sequence, 2458 residues long: Acetyl-CoA carboxylase 2 (2458 aa).

Phosphoserine is present on Ser-35. Positions 35-155 (SKSEANLIPS…SPSKEDKKQA (121 aa)) are disordered. Positions 51 to 60 (SDNSGETPQR) are enriched in polar residues. At Thr-70 the chain carries Phosphothreonine. Basic and acidic residues predominate over residues 77 to 87 (ASHKGPKDAGR). Ser-91 and Ser-95 each carry phosphoserine. The span at 103-146 (PLSSSDAAPSPELQANGTGTQGLEATDTNGLSSSARPQGQQAGS) shows a compositional bias: polar residues. Ser-169, Ser-175, Ser-192, Ser-195, and Ser-200 each carry phosphoserine. Positions 174–193 (SSDEDSVAGSSRESTRKGSR) are disordered. Thr-207 carries the phosphothreonine modification. Residue Ser-220 is modified to Phosphoserine. Ser-222 is modified (phosphoserine; by AMPK). Residues 259–761 (VIEKVLIANN…DTGWLDYLIA (503 aa)) form the Biotin carboxylation domain. Residues 414–609 (DDLQQGKRIS…LPAAQLQIAM (196 aa)) form the ATP-grasp domain. Residue 458-463 (GGGGKG) coordinates ATP. Ser-469 bears the Phosphoserine mark. Mg(2+) is bound by residues Glu-567, Glu-580, and Asn-582. Residues Glu-567, Glu-580, and Asn-582 each contribute to the Mn(2+) site. Arg-584 is a catalytic residue. The residue at position 753 (Thr-753) is a Phosphothreonine. The Biotinyl-binding domain maps to 888-962 (FEKENDPTVL…EAGCVVARLE (75 aa)). Lys-929 carries the N6-biotinyllysine modification. Position 1340 is a phosphoserine (Ser-1340). Thr-1342 bears the Phosphothreonine mark. Residues Ser-1360 and Ser-1405 each carry the phosphoserine modification. One can recognise a CoA carboxyltransferase N-terminal domain in the interval 1695–2025 (PYVTKDLLQA…DNHSPVPIIT (331 aa)). The segment at 1695–2345 (PYVTKDLLQA…EDQVKQEILQ (651 aa)) is carboxyltransferase. 3 residues coordinate CoA: Arg-1934, Lys-2238, and Arg-2240. Positions 2029–2345 (PIDREIEFLP…EDQVKQEILQ (317 aa)) constitute a CoA carboxyltransferase C-terminal domain.

Monomer, homodimer, and homotetramer. Forms filamentous polymers. Interacts with MID1IP1; interaction with MID1IP1 promotes oligomerization and increases its activity in a citrate-dependent manner. Biotin serves as cofactor. Requires Mg(2+) as cofactor. The cofactor is Mn(2+). The biotin cofactor is covalently attached to the central biotinyl-binding domain and is required for the catalytic activity. Post-translationally, phosphorylation at Ser-222 by AMPK inactivates the enzyme. Required for the maintenance of skeletal muscle lipid and glucose homeostasis. As to expression, widely expressed with highest levels in heart, skeletal muscle, liver, adipose tissue, mammary gland, adrenal gland and colon. Isoform 3 is expressed in skeletal muscle, adipose tissue and liver (at protein level). Isoform 3 is detected at high levels in adipose tissue with lower levels in heart, liver, skeletal muscle and testis.

It is found in the mitochondrion. The enzyme catalyses hydrogencarbonate + acetyl-CoA + ATP = malonyl-CoA + ADP + phosphate + H(+). It participates in lipid metabolism; malonyl-CoA biosynthesis; malonyl-CoA from acetyl-CoA: step 1/1. With respect to regulation, activity is increased by oligomerization of the protein into filaments. The oligomerization and the activity of the enzyme are inhibited by phosphorylation at Ser-222. Inhibited by its product, malonyl-CoA. Activated by citrate. Activation by MID1IP1 is citrate-dependent. Soraphen A, inhibits the enzyme by preventing the formation of active filamentous oligomers. Functionally, mitochondrial enzyme that catalyzes the carboxylation of acetyl-CoA to malonyl-CoA and plays a central role in fatty acid metabolism. Catalyzes a 2 steps reaction starting with the ATP-dependent carboxylation of the biotin carried by the biotin carboxyl carrier (BCC) domain followed by the transfer of the carboxyl group from carboxylated biotin to acetyl-CoA. Through the production of malonyl-CoA that allosterically inhibits carnitine palmitoyltransferase 1 at the mitochondria, negatively regulates fatty acid oxidation. Together with its cytosolic isozyme ACACA, which is involved in de novo fatty acid biosynthesis, promotes lipid storage. This chain is Acetyl-CoA carboxylase 2, found in Homo sapiens (Human).